Consider the following 563-residue polypeptide: Nicalin (563 aa).

The first 29 residues, 1 to 29, serve as a signal peptide directing secretion; the sequence is MQDEIIDFFRSPALLFYMTLMLTICVVNG. The Lumenal segment spans residues 30–522; that stretch reads SQQVGEVVET…NRLVAERVKP (493 aa). Asn-232 is a glycosylation site (N-linked (GlcNAc...) asparagine). The helical transmembrane segment at 523-543 threads the bilayer; that stretch reads AVFELVIAAGVFTYLSAFYYI. Residues 544 to 563 lie on the Cytoplasmic side of the membrane; that stretch reads ATHSQNTIEGTVAAIRKSIF.

Belongs to the nicastrin family. In terms of assembly, may interact with the levamisole-sensitive nicotinic acetylcholine receptor (L-AChR). May interact with nra-4 in the ER. As to expression, expressed in body wall, pharyngeal, and vulval muscles, excretory canal cell, head and motor neurons, and vulval epithelium.

It localises to the endoplasmic reticulum membrane. Its function is as follows. Involved in the recognition and selection of protein complexes to exit the endoplasmic reticulum (ER). In muscles, regulates levamisole-sensitive nicotinic acetylcholine receptor (L-AChR) subunit composition, possibly by allowing only specific L-AChR subunit combinations to exit the ER. Specifically, may promote the inclusion of alpha subunits unc-38 and unc-29 into L-AChR. Regulates L-AChR sensitivity to agonists such as nicotine and levamisole at neuro-muscular junctions. In touch neurons, may prevent ER exit of incorrectly folded mec-4-mec-10 ion channel. This Caenorhabditis elegans protein is Nicalin.